The sequence spans 838 residues: Urease (838 aa).

The Urease domain maps to 400-838 (GAIDCHVHFI…VPLSRNYFLF (439 aa)). The Ni(2+) site is built by His405, His407, and Lys488. Position 488 is an N6-carboxylysine (Lys488). Position 490 (His490) interacts with substrate. His517 and His543 together coordinate Ni(2+). His591 functions as the Proton donor in the catalytic mechanism. Asp631 is a Ni(2+) binding site.

This sequence in the C-terminal section; belongs to the metallo-dependent hydrolases superfamily. Urease alpha subunit family. As to quaternary structure, homohexamer. Other oligomeric forms may exist depending on pH and presence of salts. It depends on Ni(2+) as a cofactor. Post-translationally, carboxylation allows a single lysine to coordinate two nickel ions.

The enzyme catalyses urea + 2 H2O + H(+) = hydrogencarbonate + 2 NH4(+). It participates in nitrogen metabolism; urea degradation; CO(2) and NH(3) from urea (urease route): step 1/1. With respect to regulation, requires the three urease accessory proteins URED, UREF AND UREG for its activation. In terms of biological role, urea hydrolase involved in nitrogen recycling from ureide, purine, and arginine catabolism. The chain is Urease from Arabidopsis thaliana (Mouse-ear cress).